Reading from the N-terminus, the 616-residue chain is Dihydroxy-acid dehydratase (616 aa).

A Mg(2+)-binding site is contributed by Asp-81. A [2Fe-2S] cluster-binding site is contributed by Cys-122. Positions 123 and 124 each coordinate Mg(2+). Lys-124 is subject to N6-carboxylysine. Cys-195 is a binding site for [2Fe-2S] cluster. A Mg(2+)-binding site is contributed by Glu-491. The Proton acceptor role is filled by Ser-517.

The protein belongs to the IlvD/Edd family. As to quaternary structure, homodimer. Requires [2Fe-2S] cluster as cofactor. Mg(2+) is required as a cofactor.

The enzyme catalyses (2R)-2,3-dihydroxy-3-methylbutanoate = 3-methyl-2-oxobutanoate + H2O. It carries out the reaction (2R,3R)-2,3-dihydroxy-3-methylpentanoate = (S)-3-methyl-2-oxopentanoate + H2O. It participates in amino-acid biosynthesis; L-isoleucine biosynthesis; L-isoleucine from 2-oxobutanoate: step 3/4. Its pathway is amino-acid biosynthesis; L-valine biosynthesis; L-valine from pyruvate: step 3/4. Functions in the biosynthesis of branched-chain amino acids. Catalyzes the dehydration of (2R,3R)-2,3-dihydroxy-3-methylpentanoate (2,3-dihydroxy-3-methylvalerate) into 2-oxo-3-methylpentanoate (2-oxo-3-methylvalerate) and of (2R)-2,3-dihydroxy-3-methylbutanoate (2,3-dihydroxyisovalerate) into 2-oxo-3-methylbutanoate (2-oxoisovalerate), the penultimate precursor to L-isoleucine and L-valine, respectively. This chain is Dihydroxy-acid dehydratase, found in Salmonella typhi.